A 145-amino-acid chain; its full sequence is Hemoglobin subunit beta-1 (145 aa).

The 145-residue stretch at Thr-1–His-145 folds into the Globin domain. 2 residues coordinate heme b: His-62 and His-91.

This sequence belongs to the globin family. As to quaternary structure, major hemoglobin is a tetramer of two alpha-1 chains and two beta-1 chains. As to expression, red blood cells.

Involved in oxygen transport from the lung to the various peripheral tissues. The polypeptide is Hemoglobin subunit beta-1 (HBB1) (Triturus cristatus (Great crested newt)).